A 124-amino-acid chain; its full sequence is Mediator of RNA polymerase II transcription subunit 31 (124 aa).

The protein belongs to the Mediator complex subunit 31 family. In terms of assembly, component of the Mediator complex.

The protein localises to the nucleus. Component of the Mediator complex, a coactivator involved in the regulated transcription of nearly all RNA polymerase II-dependent genes. Mediator functions as a bridge to convey information from gene-specific regulatory proteins to the basal RNA polymerase II transcription machinery. Mediator is recruited to promoters by direct interactions with regulatory proteins and serves as a scaffold for the assembly of a functional preinitiation complex with RNA polymerase II and the general transcription factors. This Kluyveromyces lactis (strain ATCC 8585 / CBS 2359 / DSM 70799 / NBRC 1267 / NRRL Y-1140 / WM37) (Yeast) protein is Mediator of RNA polymerase II transcription subunit 31 (SOH1).